The sequence spans 266 residues: Apolipoprotein A-I (266 aa).

A signal peptide spans 1 to 18 (MKAVVLTLAVLFLTGSQA). 2 repeat units span residues 67-88 (LKLL…EQIG) and 89-110 (PVTQ…QEMS). A 10 X approximate tandem repeats region spans residues 67-266 (LKLLDNWDSL…DEAAKKLNAQ (200 aa)). Residue Met109 is modified to Methionine sulfoxide. Residues 111 to 121 (KDLEEVKQKVQ) form a 3; half-length repeat. 5 tandem repeats follow at residues 122 to 142 (PYLD…RQKV), 144 to 165 (PLGA…EKLS), 166 to 187 (PLGE…AQLA), 188 to 210 (PYSD…DGGA), and 211 to 231 (SLAE…EKAK). The stretch at 232–242 (PALEDLRQGLL) is one 9; half-length repeat. Repeat unit 10 spans residues 243–266 (PVLESFKVSLLAAVDEAAKKLNAQ).

The protein belongs to the apolipoprotein A1/A4/E family. As to quaternary structure, homodimer. Interacts with APOA1BP and CLU. Component of a sperm activating protein complex (SPAP), consisting of APOA1, an immunoglobulin heavy chain, an immunoglobulin light chain and albumin. Interacts with NDRG1. Interacts with SCGB3A2. Interacts with NAXE and YJEFN3. In terms of processing, glycosylated. Post-translationally, palmitoylated. Phosphorylation sites are present in the extracellular medium. As to expression, major protein of plasma HDL, also found in chylomicrons.

The protein resides in the secreted. Its function is as follows. Participates in the reverse transport of cholesterol from tissues to the liver for excretion by promoting cholesterol efflux from tissues and by acting as a cofactor for the lecithin cholesterol acyltransferase (LCAT). As part of the SPAP complex, activates spermatozoa motility. The chain is Apolipoprotein A-I (APOA1) from Ailuropoda melanoleuca (Giant panda).